The following is a 370-amino-acid chain: Putative replication factor C small subunit L478 (370 aa).

An ATP-binding site is contributed by 41 to 48; the sequence is GPSGSGKK. A compositionally biased stretch (basic and acidic residues) spans 342-353; it reads RNKEPEKSEKTK. The tract at residues 342–370 is disordered; sequence RNKEPEKSEKTKSKTGKLSRTNSKKTIKN. Basic residues predominate over residues 354 to 370; sequence SKTGKLSRTNSKKTIKN.

This sequence belongs to the activator 1 small subunits family. RfcS subfamily.

Its function is as follows. Part of the RFC clamp loader complex which loads the PCNA sliding clamp onto DNA. The protein is Putative replication factor C small subunit L478 of Acanthamoeba polyphaga (Amoeba).